We begin with the raw amino-acid sequence, 489 residues long: Bifunctional protein HldE (489 aa).

The segment at 1-330 (MFDFDGLSNA…RKILPPAFLA (330 aa)) is ribokinase. 205-208 (NRKE) lines the ATP pocket. Residue Asp-275 is part of the active site. Residues 358–489 (FTNGCFDILH…SLVKRAGGRA (132 aa)) form a cytidylyltransferase region.

It in the N-terminal section; belongs to the carbohydrate kinase PfkB family. In the C-terminal section; belongs to the cytidylyltransferase family. Homodimer.

It catalyses the reaction D-glycero-beta-D-manno-heptose 7-phosphate + ATP = D-glycero-beta-D-manno-heptose 1,7-bisphosphate + ADP + H(+). The catalysed reaction is D-glycero-beta-D-manno-heptose 1-phosphate + ATP + H(+) = ADP-D-glycero-beta-D-manno-heptose + diphosphate. The protein operates within nucleotide-sugar biosynthesis; ADP-L-glycero-beta-D-manno-heptose biosynthesis; ADP-L-glycero-beta-D-manno-heptose from D-glycero-beta-D-manno-heptose 7-phosphate: step 1/4. Its pathway is nucleotide-sugar biosynthesis; ADP-L-glycero-beta-D-manno-heptose biosynthesis; ADP-L-glycero-beta-D-manno-heptose from D-glycero-beta-D-manno-heptose 7-phosphate: step 3/4. Catalyzes the phosphorylation of D-glycero-D-manno-heptose 7-phosphate at the C-1 position to selectively form D-glycero-beta-D-manno-heptose-1,7-bisphosphate. Its function is as follows. Catalyzes the ADP transfer from ATP to D-glycero-beta-D-manno-heptose 1-phosphate, yielding ADP-D-glycero-beta-D-manno-heptose. The protein is Bifunctional protein HldE of Nitrobacter hamburgensis (strain DSM 10229 / NCIMB 13809 / X14).